We begin with the raw amino-acid sequence, 321 residues long: 4-dihydromethyl-trisporate dehydrogenase (321 aa).

Residue Tyr-51 is the Proton donor of the active site. His-113 contacts substrate.

The protein belongs to the aldo/keto reductase family.

It participates in pheromone biosynthesis; trisporate biosynthesis. Its function is as follows. Catalyzes the NADP-dependent oxidation of (+) mating-type specific precursor 4-dihydromethyl-trisporate to methyl-trisporate. The chain is 4-dihydromethyl-trisporate dehydrogenase (tdh) from Mucor mucedo (Common pinmould).